Consider the following 722-residue polypeptide: Zinc finger BED domain-containing protein RICESLEEPER 1 (722 aa).

The BED-type zinc finger occupies 66 to 126 (RKKSLVWEHF…GSCPKIKNQE (61 aa)). The Zn(2+) site is built by Cys-89, Cys-92, His-113, and Cys-119. A disordered region spans residues 572 to 592 (VEQGGGNNAPASENSTQATAP). Positions 580–592 (APASENSTQATAP) are enriched in polar residues. Positions 617–702 (ELEQYLDESL…EALVCAKDWL (86 aa)) are HATC (Hobo-Ac-Tam3) domain.

In terms of assembly, homodimer.

Its subcellular location is the nucleus. Its function is as follows. Transposase-like protein that is essential for plant growth and development. May regulate global gene expression by recruiting other cellular factors. This is Zinc finger BED domain-containing protein RICESLEEPER 1 from Oryza sativa subsp. japonica (Rice).